Reading from the N-terminus, the 340-residue chain is Protein RecA (340 aa).

Residue Gly-65–Thr-72 participates in ATP binding.

It belongs to the RecA family.

It is found in the cytoplasm. Functionally, can catalyze the hydrolysis of ATP in the presence of single-stranded DNA, the ATP-dependent uptake of single-stranded DNA by duplex DNA, and the ATP-dependent hybridization of homologous single-stranded DNAs. It interacts with LexA causing its activation and leading to its autocatalytic cleavage. This is Protein RecA from Thermus thermophilus (strain ATCC BAA-163 / DSM 7039 / HB27).